Consider the following 191-residue polypeptide: MATITADNNSNSHFEMEIEAESAILQQIQNKMAKHLESAAYVPPTEEEQKAIDAKSVFIGNVDFNSTIEEIEEHFKGCGQIVKTTIPKDKFTKKQKNFAYIEFDDSSSIENALVMNGSLFRSRPIVVTAKRTNIPGMGHGVRGSSRGTFGRGRGAARGAPGRQQTVVVKYVYVNGPNRGGRGGRGRRFNPY.

In terms of domain architecture, RRM spans 55 to 132 (KSVFIGNVDF…RPIVVTAKRT (78 aa)). Residues 136–160 (GMGHGVRGSSRGTFGRGRGAARGAP) are disordered.

This Caenorhabditis elegans protein is Putative RNA-binding protein EEED8.4.